Here is a 354-residue protein sequence, read N- to C-terminus: DNA polymerase IV (354 aa).

The 182-residue stretch at isoleucine 6 to glycine 187 folds into the UmuC domain. Mg(2+) contacts are provided by aspartate 10 and aspartate 105. Residue glutamate 106 is part of the active site.

This sequence belongs to the DNA polymerase type-Y family. In terms of assembly, monomer. Mg(2+) serves as cofactor.

It localises to the cytoplasm. The catalysed reaction is DNA(n) + a 2'-deoxyribonucleoside 5'-triphosphate = DNA(n+1) + diphosphate. Functionally, poorly processive, error-prone DNA polymerase involved in untargeted mutagenesis. Copies undamaged DNA at stalled replication forks, which arise in vivo from mismatched or misaligned primer ends. These misaligned primers can be extended by PolIV. Exhibits no 3'-5' exonuclease (proofreading) activity. May be involved in translesional synthesis, in conjunction with the beta clamp from PolIII. In Pseudomonas putida (strain ATCC 700007 / DSM 6899 / JCM 31910 / BCRC 17059 / LMG 24140 / F1), this protein is DNA polymerase IV.